Here is a 1072-residue protein sequence, read N- to C-terminus: DNA-directed RNA polymerase subunit beta (1072 aa).

This sequence belongs to the RNA polymerase beta chain family. In terms of assembly, in plastids the minimal PEP RNA polymerase catalytic core is composed of four subunits: alpha, beta, beta', and beta''. When a (nuclear-encoded) sigma factor is associated with the core the holoenzyme is formed, which can initiate transcription.

The protein localises to the plastid. It is found in the chloroplast. The catalysed reaction is RNA(n) + a ribonucleoside 5'-triphosphate = RNA(n+1) + diphosphate. In terms of biological role, DNA-dependent RNA polymerase catalyzes the transcription of DNA into RNA using the four ribonucleoside triphosphates as substrates. This chain is DNA-directed RNA polymerase subunit beta, found in Crucihimalaya wallichii (Rock-cress).